Reading from the N-terminus, the 220-residue chain is MKLSNLLLFANVGTLLVKATDENISPNEENTPRYAQFNIDYSVLDQPNYDPMAPMEFENGENITLAFNFANNEEVPVKLIAVGGNIINARSGDEVANITRSSLGEIEVDVNTSVSFNQAINLKLDEGDYFLLPNVFVLKEGELMAVGTSPSRIKILPPPMSFFNPKFLSIQAVLIGVISYFTYFIFRSSKKERRGVVSKTKAPKKVKLDESWLPENHLKK.

Residues 1–19 (MKLSNLLLFANVGTLLVKA) form the signal peptide. Residues 20 to 166 (TDENISPNEE…PPPMSFFNPK (147 aa)) are Lumenal-facing. A helical transmembrane segment spans residues 167–186 (FLSIQAVLIGVISYFTYFIF). The Cytoplasmic segment spans residues 187–220 (RSSKKERRGVVSKTKAPKKVKLDESWLPENHLKK).

Belongs to the IRC22 family.

The protein resides in the endoplasmic reticulum membrane. Its function is as follows. Is probably involved in a pathway contributing to genomic integrity. In Eremothecium gossypii (strain ATCC 10895 / CBS 109.51 / FGSC 9923 / NRRL Y-1056) (Yeast), this protein is Increased recombination centers protein 22 (IRC22).